A 426-amino-acid polypeptide reads, in one-letter code: Elongation factor 1-alpha (426 aa).

The region spanning 5 to 221 (KPHMNLAVIG…DTFKEPDKPT (217 aa)) is the tr-type G domain. Positions 14-21 (GHIDHGKS) are G1. 14–21 (GHIDHGKS) contacts GTP. Serine 21 is a Mg(2+) binding site. The interval 70–74 (GITID) is G2. Residues 91 to 94 (DCPG) form a G3 region. Residues 91 to 95 (DCPGH) and 146 to 149 (NKMD) each bind GTP. The G4 stretch occupies residues 146–149 (NKMD). Residues 185–187 (SSF) form a G5 region.

It belongs to the TRAFAC class translation factor GTPase superfamily. Classic translation factor GTPase family. EF-Tu/EF-1A subfamily.

It localises to the cytoplasm. The enzyme catalyses GTP + H2O = GDP + phosphate + H(+). Functionally, GTP hydrolase that promotes the GTP-dependent binding of aminoacyl-tRNA to the A-site of ribosomes during protein biosynthesis. This chain is Elongation factor 1-alpha, found in Methanosphaerula palustris (strain ATCC BAA-1556 / DSM 19958 / E1-9c).